The primary structure comprises 166 residues: Urease accessory protein UreE 2 (166 aa).

The segment at 135 to 154 (EHGAYGGGHHHSRAGEEDFN) is disordered.

It belongs to the UreE family.

It is found in the cytoplasm. Involved in urease metallocenter assembly. Binds nickel. Probably functions as a nickel donor during metallocenter assembly. This Pseudomonas syringae pv. syringae (strain B728a) protein is Urease accessory protein UreE 2.